The chain runs to 95 residues: MLHTLSHSPWHADIEGLLRMLGDGDELLLIQDGVLAAIDGGRFIEILNNAPIKVIALKDDIDARGLAGQISTKIDVVGYTDFVKLAIKHPTQMSW.

It belongs to the DsrH/TusB family. As to quaternary structure, heterohexamer, formed by a dimer of trimers. The hexameric TusBCD complex contains 2 copies each of TusB, TusC and TusD. The TusBCD complex interacts with TusE.

It is found in the cytoplasm. Its function is as follows. Part of a sulfur-relay system required for 2-thiolation of 5-methylaminomethyl-2-thiouridine (mnm(5)s(2)U) at tRNA wobble positions. The polypeptide is Protein TusB (Enterobacter sp. (strain 638)).